The chain runs to 289 residues: Lipoyl synthase (289 aa).

Residues C33, C38, C44, C59, C63, C66, and S274 each contribute to the [4Fe-4S] cluster site. One can recognise a Radical SAM core domain in the interval 45–263 (FAGGTATFLI…SQGESELGFL (219 aa)).

This sequence belongs to the radical SAM superfamily. Lipoyl synthase family. [4Fe-4S] cluster is required as a cofactor.

The protein localises to the cytoplasm. The enzyme catalyses [[Fe-S] cluster scaffold protein carrying a second [4Fe-4S](2+) cluster] + N(6)-octanoyl-L-lysyl-[protein] + 2 oxidized [2Fe-2S]-[ferredoxin] + 2 S-adenosyl-L-methionine + 4 H(+) = [[Fe-S] cluster scaffold protein] + N(6)-[(R)-dihydrolipoyl]-L-lysyl-[protein] + 4 Fe(3+) + 2 hydrogen sulfide + 2 5'-deoxyadenosine + 2 L-methionine + 2 reduced [2Fe-2S]-[ferredoxin]. Its pathway is protein modification; protein lipoylation via endogenous pathway; protein N(6)-(lipoyl)lysine from octanoyl-[acyl-carrier-protein]: step 2/2. Catalyzes the radical-mediated insertion of two sulfur atoms into the C-6 and C-8 positions of the octanoyl moiety bound to the lipoyl domains of lipoate-dependent enzymes, thereby converting the octanoylated domains into lipoylated derivatives. In Synechococcus sp. (strain RCC307), this protein is Lipoyl synthase.